The chain runs to 417 residues: Imidazolonepropionase (417 aa).

Positions 77 and 79 each coordinate Fe(3+). The Zn(2+) site is built by histidine 77 and histidine 79. 3 residues coordinate 4-imidazolone-5-propanoate: arginine 86, tyrosine 149, and histidine 182. Residue tyrosine 149 participates in N-formimidoyl-L-glutamate binding. Histidine 244 is a binding site for Fe(3+). Position 244 (histidine 244) interacts with Zn(2+). A 4-imidazolone-5-propanoate-binding site is contributed by glutamate 247. Aspartate 323 provides a ligand contact to Fe(3+). Position 323 (aspartate 323) interacts with Zn(2+). Asparagine 325 contacts N-formimidoyl-L-glutamate.

The protein belongs to the metallo-dependent hydrolases superfamily. HutI family. The cofactor is Zn(2+). It depends on Fe(3+) as a cofactor.

It is found in the cytoplasm. The enzyme catalyses 4-imidazolone-5-propanoate + H2O = N-formimidoyl-L-glutamate. The protein operates within amino-acid degradation; L-histidine degradation into L-glutamate; N-formimidoyl-L-glutamate from L-histidine: step 3/3. Catalyzes the hydrolytic cleavage of the carbon-nitrogen bond in imidazolone-5-propanoate to yield N-formimidoyl-L-glutamate. It is the third step in the universal histidine degradation pathway. This Halobacterium salinarum (strain ATCC 29341 / DSM 671 / R1) protein is Imidazolonepropionase.